An 892-amino-acid chain; its full sequence is Alanine--tRNA ligase (892 aa).

4 residues coordinate Zn(2+): histidine 594, histidine 598, cysteine 702, and histidine 706.

Belongs to the class-II aminoacyl-tRNA synthetase family. Zn(2+) is required as a cofactor.

The protein localises to the cytoplasm. It carries out the reaction tRNA(Ala) + L-alanine + ATP = L-alanyl-tRNA(Ala) + AMP + diphosphate. Its function is as follows. Catalyzes the attachment of alanine to tRNA(Ala) in a two-step reaction: alanine is first activated by ATP to form Ala-AMP and then transferred to the acceptor end of tRNA(Ala). Also edits incorrectly charged Ser-tRNA(Ala) and Gly-tRNA(Ala) via its editing domain. The polypeptide is Alanine--tRNA ligase (Pyrobaculum aerophilum (strain ATCC 51768 / DSM 7523 / JCM 9630 / CIP 104966 / NBRC 100827 / IM2)).